A 229-amino-acid chain; its full sequence is ATP synthase subunit a 3 (229 aa).

The next 6 helical transmembrane spans lie at 25–45 (ADAVSYTWLIIALLLLLSFLA), 86–106 (VATIGIFVLVSNLIGLIPGFF), 111–131 (NINTTAACAIVVFLSTHVVGI), 142–162 (FCGPILWLTPIMFFIEVIGHL), 181–201 (LVLIIFFGLAPFLVPLPMMLM), and 202–222 (GVLVSFIQAFVFMLLTMIYIQ).

Belongs to the ATPase A chain family. In terms of assembly, F-type ATPases have 2 components, CF(1) - the catalytic core - and CF(0) - the membrane proton channel. CF(1) has five subunits: alpha(3), beta(3), gamma(1), delta(1), epsilon(1). CF(0) has three main subunits: a(1), b(2) and c(9-12). The alpha and beta chains form an alternating ring which encloses part of the gamma chain. CF(1) is attached to CF(0) by a central stalk formed by the gamma and epsilon chains, while a peripheral stalk is formed by the delta and b chains.

Its subcellular location is the cell inner membrane. Functionally, key component of the proton channel; it plays a direct role in the translocation of protons across the membrane. The protein is ATP synthase subunit a 3 of Pelobacter propionicus (strain DSM 2379 / NBRC 103807 / OttBd1).